Consider the following 644-residue polypeptide: Translation factor GUF1, mitochondrial (644 aa).

A mitochondrion-targeting transit peptide spans Met1 to Cys14. Residues Glu46–Thr227 enclose the tr-type G domain. GTP-binding positions include Ala55–Ser62, Asp120–His124, and Asn174–Asp177.

This sequence belongs to the TRAFAC class translation factor GTPase superfamily. Classic translation factor GTPase family. LepA subfamily.

Its subcellular location is the mitochondrion inner membrane. The enzyme catalyses GTP + H2O = GDP + phosphate + H(+). Its function is as follows. Promotes mitochondrial protein synthesis. May act as a fidelity factor of the translation reaction, by catalyzing a one-codon backward translocation of tRNAs on improperly translocated ribosomes. Binds to mitochondrial ribosomes in a GTP-dependent manner. The polypeptide is Translation factor GUF1, mitochondrial (Eremothecium gossypii (strain ATCC 10895 / CBS 109.51 / FGSC 9923 / NRRL Y-1056) (Yeast)).